The chain runs to 252 residues: NDR1/HIN1-like protein 6 (252 aa).

A disordered region spans residues 1–46 (MSQHQKIYPVQDPEAATARPTAPLVPRGSSRSEHGDPSKVPLNQRP). A helical transmembrane segment spans residues 70-90 (FCFLLLLVVAVGASIGILYLV). 4 N-linked (GlcNAc...) asparagine glycosylation sites follow: N121, N154, N166, and N180.

As to quaternary structure, homodimer. Highly expressed in seeds and at lower level in roots and senescing leaves. Expressed in leaves and flowers.

The protein resides in the cell membrane. It is found in the cytoplasm. The protein localises to the cytosol. Its function is as follows. Plays an important role in the abiotic stresses-induced abscisic acid (ABA) signaling and biosynthesis. Acts as a positive regulator of ABA-mediated seed germination inhibition. Functions downstream of ABF2/AREB1, ABF4/AREB2 and ABF3. The protein is NDR1/HIN1-like protein 6 of Arabidopsis thaliana (Mouse-ear cress).